The following is an 86-amino-acid chain: Co-chaperonin GroES (86 aa).

This sequence belongs to the GroES chaperonin family. Heptamer of 7 subunits arranged in a ring. Interacts with the chaperonin GroEL.

Its subcellular location is the cytoplasm. Its function is as follows. Together with the chaperonin GroEL, plays an essential role in assisting protein folding. The GroEL-GroES system forms a nano-cage that allows encapsulation of the non-native substrate proteins and provides a physical environment optimized to promote and accelerate protein folding. GroES binds to the apical surface of the GroEL ring, thereby capping the opening of the GroEL channel. The chain is Co-chaperonin GroES from Sulfurovum sp. (strain NBC37-1).